The following is a 487-amino-acid chain: CUGBP Elav-like family member 1 (487 aa).

At Met1 the chain carries N-acetylmethionine. Thr4 carries the phosphothreonine modification. RRM domains lie at 16–99 (IKMF…PADS) and 108–188 (RKLF…FADT). Lys109 is covalently cross-linked (Glycyl lysine isopeptide (Lys-Gly) (interchain with G-Cter in SUMO2)). Residues Ser179 and Ser303 each carry the phosphoserine modification. The interval 277-310 (TPSGTNALTTSSSPLSVLTSSAGSSPSSSSSNSV) is disordered. Low complexity predominate over residues 283–310 (ALTTSSSPLSVLTSSAGSSPSSSSSNSV). The region spanning 402–480 (ANLFIYHLPQ…KRLKVQLKRS (79 aa)) is the RRM 3 domain.

The protein belongs to the CELF/BRUNOL family. In terms of assembly, interacts with HNRNPH1; the interaction in RNA-dependent. Interacts with PARN. Component of an EIF2 complex at least composed of CELF1/CUGBP1, CALR, CALR3, EIF2S1, EIF2S2, HSP90B1 and HSPA5. Associates with polysomes.

The protein localises to the nucleus. Its subcellular location is the cytoplasm. In terms of biological role, RNA-binding protein implicated in the regulation of several post-transcriptional events. Involved in pre-mRNA alternative splicing, mRNA translation and stability. Mediates exon inclusion and/or exclusion in pre-mRNA that are subject to tissue-specific and developmentally regulated alternative splicing. Specifically activates exon 5 inclusion of cardiac isoforms of TNNT2 during heart remodeling at the juvenile to adult transition. Acts both as an activator and as a repressor of a pair of coregulated exons: promotes inclusion of the smooth muscle (SM) exon but exclusion of the non-muscle (NM) exon in actinin pre-mRNAs. Activates SM exon 5 inclusion by antagonizing the repressive effect of PTB. Promotes exclusion of exon 11 of the INSR pre-mRNA. Inhibits, together with HNRNPH1, insulin receptor (IR) pre-mRNA exon 11 inclusion in myoblast. Increases translation and controls the choice of translation initiation codon of CEBPB mRNA. Increases mRNA translation of CEBPB in aging liver. Increases translation of CDKN1A mRNA by antagonizing the repressive effect of CALR3. Mediates rapid cytoplasmic mRNA deadenylation. Recruits the deadenylase PARN to the poly(A) tail of EDEN-containing mRNAs to promote their deadenylation. Required for completion of spermatogenesis. Binds to (CUG)n triplet repeats in the 3'-UTR of transcripts such as DMPK and to Bruno response elements (BREs). Binds to muscle-specific splicing enhancer (MSE) intronic sites flanking the alternative exon 5 of TNNT2 pre-mRNA. Binds to AU-rich sequences (AREs or EDEN-like) localized in the 3'-UTR of JUN and FOS mRNAs. Binds to the IR RNA. Binds to the 5'-region of CDKN1A and CEBPB mRNAs. Binds with the 5'-region of CEBPB mRNA in aging liver. May be a specific regulator of miRNA biogenesis. Binds to primary microRNA pri-MIR140 and, with CELF2, negatively regulates the processing to mature miRNA. The protein is CUGBP Elav-like family member 1 (Celf1) of Rattus norvegicus (Rat).